The sequence spans 123 residues: Small ribosomal subunit protein uS12 (123 aa).

A 3-methylthioaspartic acid modification is found at Asp-89.

It belongs to the universal ribosomal protein uS12 family. In terms of assembly, part of the 30S ribosomal subunit. Contacts proteins S8 and S17. May interact with IF1 in the 30S initiation complex.

With S4 and S5 plays an important role in translational accuracy. Functionally, interacts with and stabilizes bases of the 16S rRNA that are involved in tRNA selection in the A site and with the mRNA backbone. Located at the interface of the 30S and 50S subunits, it traverses the body of the 30S subunit contacting proteins on the other side and probably holding the rRNA structure together. The combined cluster of proteins S8, S12 and S17 appears to hold together the shoulder and platform of the 30S subunit. The chain is Small ribosomal subunit protein uS12 from Anaeromyxobacter sp. (strain Fw109-5).